Here is a 647-residue protein sequence, read N- to C-terminus: Macrolide export ATP-binding/permease protein MacB (647 aa).

Residues Leu5–Ile243 form the ABC transporter domain. Position 41-48 (Gly41–Ser48) interacts with ATP. Helical transmembrane passes span Leu272–Gly292, Leu522–Ile542, Ile576–Ile596, and Pro610–Leu630.

The protein belongs to the ABC transporter superfamily. Macrolide exporter (TC 3.A.1.122) family. Homodimer. Part of the tripartite efflux system MacAB-TolC, which is composed of an inner membrane transporter, MacB, a periplasmic membrane fusion protein, MacA, and an outer membrane component, TolC. The complex forms a large protein conduit and can translocate molecules across both the inner and outer membranes. Interacts with MacA.

It localises to the cell inner membrane. Its function is as follows. Part of the tripartite efflux system MacAB-TolC. MacB is a non-canonical ABC transporter that contains transmembrane domains (TMD), which form a pore in the inner membrane, and an ATP-binding domain (NBD), which is responsible for energy generation. Confers resistance against macrolides. In Photorhabdus laumondii subsp. laumondii (strain DSM 15139 / CIP 105565 / TT01) (Photorhabdus luminescens subsp. laumondii), this protein is Macrolide export ATP-binding/permease protein MacB.